The sequence spans 222 residues: Transcriptional regulatory protein BasR (222 aa).

A Response regulatory domain is found at 2 to 116 (KILIVEDDTL…ELHARIRALL (115 aa)). Asp-51 bears the 4-aspartylphosphate mark. The segment at residues 124–218 (ESELIVGNLT…VRGFGYMLVA (95 aa)) is a DNA-binding region (ompR/PhoB-type).

Homodimer. Phosphorylated by BasS.

The protein localises to the cytoplasm. Functionally, member of the two-component regulatory system BasS/BasR. BasR induces the transcription of the ugd, ais, arnBCADTEF and eptA-basRS loci, all involved in resistance to polymyxin. In Escherichia coli (strain K12), this protein is Transcriptional regulatory protein BasR (basR).